The following is a 503-amino-acid chain: Puromycin resistance protein pur8 (503 aa).

Residues 1–24 (MARKPDISAVPVESAACQGPDPRR) lie on the Cytoplasmic side of the membrane. The chain crosses the membrane as a helical span at residues 25–45 (WWGLVVILAAQLLVVLDGTVV). Residues 46–64 (NIALPSVQRDLGMSDTSRQ) lie on the Extracellular side of the membrane. The helical transmembrane segment at 65 to 85 (WVITAYTLAFGGLLLLGGRVA) threads the bilayer. Residues 86–92 (DAFGRRR) are Cytoplasmic-facing. Residues 93–113 (IFAVGILGFGLASLLGGAAPD) traverse the membrane as a helical segment. Topologically, residues 114 to 122 (PGTLFLARA) are extracellular. A helical membrane pass occupies residues 123–143 (LQGVFAAALAPAALALINTLF). The Cytoplasmic portion of the chain corresponds to 144 to 152 (TEPGERGKA). The helical transmembrane segment at 153–173 (FGVYGAVSGGGAAVGLLAGGL) threads the bilayer. Residues 174–181 (LTEYLDWR) are Extracellular-facing. Residues 182–202 (WCLYVNAPVALLALLGCRLLP) traverse the membrane as a helical segment. Topologically, residues 203–212 (RDRRTGRAVR) are cytoplasmic. Residues 213–233 (LDLPGTLLGCGGLVAIVYAFA) traverse the membrane as a helical segment. Residues 234-241 (EAESGWGD) lie on the Extracellular side of the membrane. Residues 242-262 (PLVVRLLVLGVLMLVAFALVE) traverse the membrane as a helical segment. At 263–280 (RRVQDPLLPPGVVAHRVR) the chain is on the cytoplasmic side. A helical transmembrane segment spans residues 281 to 301 (GGSFLVVGLPQIGLFGLFLFL). Over 302 to 313 (TYYLQGILDYSP) the chain is Extracellular. Residues 314–334 (VLTGVAFLPLGLGIAVGSSLI) traverse the membrane as a helical segment. At 335–346 (AARLLPRTRPRT) the chain is on the cytoplasmic side. A helical membrane pass occupies residues 347–367 (LIVGALLAAAAGMALLTRLEP). Residues 368–371 (DTPQ) are Extracellular-facing. The helical transmembrane segment at 372 to 392 (VYLTHLLPAQILIGLGIGCMM) threads the bilayer. At 393–422 (MPAMHTATARVAPHEAGAAAAVVNSAQQVG) the chain is on the cytoplasmic side. Residues 423 to 443 (GALGVALLNTVSTGATAAYLA) form a helical membrane-spanning segment. The Extracellular portion of the chain corresponds to 444 to 461 (DHGTSPAATVDGTVHGYT). The chain crosses the membrane as a helical span at residues 462–482 (VAIAFAVGVLLLTAVLAWVLI). At 483–503 (DSRTEAADETGSASVTPARPR) the chain is on the cytoplasmic side.

This sequence belongs to the major facilitator superfamily. EmrB family.

It is found in the cell membrane. Functionally, may be involved in active puromycin efflux energized by a proton-dependent electrochemical gradient. In addition, it could be implicated in secreting N-acetylpuromycin, the last intermediate of the puromycin biosynthesis pathway, to the environment. The chain is Puromycin resistance protein pur8 (pur8) from Streptomyces alboniger.